Consider the following 122-residue polypeptide: Large ribosomal subunit protein uL18 (122 aa).

The segment covering 1–16 (MFKKVDRKASRQKKQM) has biased composition (basic residues). Residues 1 to 29 (MFKKVDRKASRQKKQMSIRNKISGTPERP) form a disordered region.

It belongs to the universal ribosomal protein uL18 family. In terms of assembly, part of the 50S ribosomal subunit; part of the 5S rRNA/L5/L18/L25 subcomplex. Contacts the 5S and 23S rRNAs.

In terms of biological role, this is one of the proteins that bind and probably mediate the attachment of the 5S RNA into the large ribosomal subunit, where it forms part of the central protuberance. The protein is Large ribosomal subunit protein uL18 of Fusobacterium nucleatum subsp. nucleatum (strain ATCC 25586 / DSM 15643 / BCRC 10681 / CIP 101130 / JCM 8532 / KCTC 2640 / LMG 13131 / VPI 4355).